The chain runs to 339 residues: Ribosomal RNA small subunit methyltransferase H (339 aa).

S-adenosyl-L-methionine is bound by residues 44 to 46 (GGY), Asp-61, Phe-88, Asp-105, and Gln-112. Residues 263–312 (PQAQSRHLPEKAAAQPVFEKPMKPVSPGEAETAENPRARSAHLRAARRTA) form a disordered region. Positions 301-312 (RSAHLRAARRTA) are enriched in basic residues.

Belongs to the methyltransferase superfamily. RsmH family.

It localises to the cytoplasm. The catalysed reaction is cytidine(1402) in 16S rRNA + S-adenosyl-L-methionine = N(4)-methylcytidine(1402) in 16S rRNA + S-adenosyl-L-homocysteine + H(+). Specifically methylates the N4 position of cytidine in position 1402 (C1402) of 16S rRNA. The sequence is that of Ribosomal RNA small subunit methyltransferase H from Chelativorans sp. (strain BNC1).